We begin with the raw amino-acid sequence, 268 residues long: Protein CONTINUOUS VASCULAR RING 1 (268 aa).

The Cytoplasmic segment spans residues 1–70 (MGDEKPVIVM…GWASKKFMTG (70 aa)). The segment at 21–48 (IPVADSGDKDDGSSSKPSSSSSASSSSH) is disordered. Positions 34–48 (SSKPSSSSSASSSSH) are enriched in low complexity. Residues 71–91 (CVILLPIAITFYITWWFIHFV) traverse the membrane as a helical segment. The Extracellular portion of the chain corresponds to 92 to 103 (DGFFSPIYAQLG). A helical transmembrane segment spans residues 104-124 (INVFGFGFLTSIAFIFLVGVF). At 125 to 268 (MSSWLGASVL…LASIDRATSL (144 aa)) the chain is on the cytoplasmic side.

This sequence belongs to the plant COV1 protein family. Mostly expressed in flowers and stems, and, to a lower extent, in roots and leaves.

The protein localises to the membrane. In terms of biological role, involved in the regulation of vascular patterning in the stem, probably by negatively regulating the differentiation of vascular tissue. In Arabidopsis thaliana (Mouse-ear cress), this protein is Protein CONTINUOUS VASCULAR RING 1.